A 385-amino-acid chain; its full sequence is 1-deoxy-D-xylulose 5-phosphate reductoisomerase (385 aa).

NADPH contacts are provided by Thr-10, Gly-11, Ser-12, Ile-13, Lys-37, and Asn-124. A 1-deoxy-D-xylulose 5-phosphate-binding site is contributed by Lys-125. Position 126 (Glu-126) interacts with NADPH. Position 150 (Asp-150) interacts with Mn(2+). Ser-151, Glu-152, Ser-176, and His-199 together coordinate 1-deoxy-D-xylulose 5-phosphate. Glu-152 contacts Mn(2+). Gly-205 provides a ligand contact to NADPH. 1-deoxy-D-xylulose 5-phosphate-binding residues include Ser-212, Asn-217, Lys-218, and Glu-221. Glu-221 contacts Mn(2+).

The protein belongs to the DXR family. Mg(2+) is required as a cofactor. The cofactor is Mn(2+).

The catalysed reaction is 2-C-methyl-D-erythritol 4-phosphate + NADP(+) = 1-deoxy-D-xylulose 5-phosphate + NADPH + H(+). The protein operates within isoprenoid biosynthesis; isopentenyl diphosphate biosynthesis via DXP pathway; isopentenyl diphosphate from 1-deoxy-D-xylulose 5-phosphate: step 1/6. Its function is as follows. Catalyzes the NADPH-dependent rearrangement and reduction of 1-deoxy-D-xylulose-5-phosphate (DXP) to 2-C-methyl-D-erythritol 4-phosphate (MEP). The sequence is that of 1-deoxy-D-xylulose 5-phosphate reductoisomerase from Clostridium botulinum (strain 657 / Type Ba4).